The sequence spans 147 residues: UPF0216 protein MK1676 (147 aa).

It belongs to the UPF0216 family.

This Methanopyrus kandleri (strain AV19 / DSM 6324 / JCM 9639 / NBRC 100938) protein is UPF0216 protein MK1676.